Consider the following 462-residue polypeptide: Coagulation factor IX (462 aa).

The N-terminal stretch at 1-21 (MADAPGLIPIFLLGYLLSTEC) is a signal peptide. Residues 22 to 39 (AVFLDRENATKILTRPKR) constitute a propeptide that is removed on maturation. Ca(2+) is bound by residues tyrosine 40, asparagine 41, glutamate 46, glutamate 47, glutamate 54, glutamate 56, glutamate 59, glutamate 60, glutamate 65, glutamate 66, and glutamate 69. A Gla domain is found at 40–86 (YNSGKLEEFVQGNLERECIEERCSFEEAREVFENTEKTTEFWKQYVD). 4-carboxyglutamate occurs at positions 46, 47, 54, 56, 59, 60, 65, 66, 69, 72, and 75. Glutamate 54 provides a ligand contact to Mg(2+). A disulfide bridge connects residues cysteine 57 and cysteine 62. Residue glutamate 59 participates in Mg(2+) binding. Glutamate 65 provides a ligand contact to Mg(2+). Glutamate 69 contacts Mg(2+). Residue glutamate 75 participates in Ca(2+) binding. Glutamate 75 is a binding site for Mg(2+). O-linked (GalNAc...) threonine glycosylation is present at threonine 78. Residues glutamate 79, aspartate 86, glycine 87, and glutamine 89 each coordinate Ca(2+). Residue glutamate 79 is modified to 4-carboxyglutamate. Glutamate 79 contributes to the Mg(2+) binding site. The region spanning 86-122 (DGDQCESNPCLNGGICKDDINSYECWCQAGFEGRNCE) is the EGF-like; calcium-binding domain. Intrachain disulfides connect cysteine 90–cysteine 101, cysteine 95–cysteine 110, cysteine 112–cysteine 121, cysteine 127–cysteine 138, cysteine 134–cysteine 148, cysteine 150–cysteine 163, cysteine 171–cysteine 336, cysteine 253–cysteine 269, cysteine 383–cysteine 397, and cysteine 408–cysteine 436. The O-linked (Glc...) serine glycan is linked to serine 92. Ca(2+) is bound by residues aspartate 103 and aspartate 104. Aspartate 103 carries the post-translational modification (3R)-3-hydroxyaspartate. Position 107 is a phosphoserine (serine 107). A propeptide spans 186–227 (AETVFSNTDYGNSTELILDDITNSTILDNLTENSEPINDFTR) (activation peptide). Tyrosine 195 bears the Sulfotyrosine mark. The residue at position 198 (serine 198) is a Phosphoserine. Threonine 199 is subject to Phosphothreonine; alternate. O-linked (GalNAc...) threonine; alternate glycosylation is present at threonine 199. N-linked (GlcNAc...) asparagine glycans are attached at residues asparagine 208 and asparagine 214. 2 O-linked (GalNAc...) threonine glycosylation sites follow: threonine 216 and threonine 226. One can recognise a Peptidase S1 domain in the interval 228 to 460 (VVGGENAKPG…YVNWIKEKTK (233 aa)). Histidine 268 serves as the catalytic Charge relay system. The Ca(2+) site is built by glutamate 282, asparagine 284, glutamate 287, glutamate 289, and glutamate 292. Residue asparagine 307 is glycosylated (N-linked (GlcNAc...) asparagine). Catalysis depends on aspartate 316, which acts as the Charge relay system. The active-site Charge relay system is serine 412.

This sequence belongs to the peptidase S1 family. Heterodimer of a light chain and a heavy chain; disulfide-linked. Interacts (inactive and activated) with F11 (activated) in calcium-dependent manner. Interacts with SERPINC1. Interacts (inactive and activated) with nitrophorin-2, an anticoagulant protein from Rhodnius prolixus. Post-translationally, activated by factor XIa, which excises the activation peptide. The propeptide can also be removed by snake venom protease. Activated by coagulation factor VIIa-tissue factor (F7-F3) complex in calcium-dependent manner. The iron and 2-oxoglutarate dependent 3-hydroxylation of aspartate and asparagine is (R) stereospecific within EGF domains. In terms of processing, predominantly O-glucosylated at Ser-92 by POGLUT1 in vitro.

Its subcellular location is the secreted. It carries out the reaction Selective cleavage of Arg-|-Ile bond in factor X to form factor Xa.. Factor IX is a vitamin K-dependent plasma protein that participates in the intrinsic pathway of blood coagulation by converting factor X to its active form in the presence of Ca(2+) ions, phospholipids, and factor VIIIa. The chain is Coagulation factor IX (F9) from Rattus norvegicus (Rat).